We begin with the raw amino-acid sequence, 330 residues long: Beta-ketoacyl-[acyl-carrier-protein] synthase III (330 aa).

Active-site residues include C114 and H254. The segment at 255-259 is ACP-binding; the sequence is QANLR. N284 is an active-site residue.

This sequence belongs to the thiolase-like superfamily. FabH family. As to quaternary structure, homodimer.

The protein resides in the cytoplasm. It catalyses the reaction malonyl-[ACP] + acetyl-CoA + H(+) = 3-oxobutanoyl-[ACP] + CO2 + CoA. It functions in the pathway lipid metabolism; fatty acid biosynthesis. Functionally, catalyzes the condensation reaction of fatty acid synthesis by the addition to an acyl acceptor of two carbons from malonyl-ACP. Catalyzes the first condensation reaction which initiates fatty acid synthesis and may therefore play a role in governing the total rate of fatty acid production. Possesses both acetoacetyl-ACP synthase and acetyl transacylase activities. Its substrate specificity determines the biosynthesis of branched-chain and/or straight-chain of fatty acids. In Roseiflexus castenholzii (strain DSM 13941 / HLO8), this protein is Beta-ketoacyl-[acyl-carrier-protein] synthase III.